A 216-amino-acid chain; its full sequence is Large ribosomal subunit protein uL3 (216 aa).

Residues 136–155 are disordered; the sequence is GVSISHRSHGSTGQRQDPGK. N5-methylglutamine is present on Gln151.

The protein belongs to the universal ribosomal protein uL3 family. In terms of assembly, part of the 50S ribosomal subunit. Forms a cluster with proteins L14 and L19. In terms of processing, methylated by PrmB.

Its function is as follows. One of the primary rRNA binding proteins, it binds directly near the 3'-end of the 23S rRNA, where it nucleates assembly of the 50S subunit. This is Large ribosomal subunit protein uL3 from Rickettsia prowazekii (strain Madrid E).